We begin with the raw amino-acid sequence, 86 residues long: Putative membrane protein insertion efficiency factor (86 aa).

The protein belongs to the UPF0161 family.

It localises to the cell inner membrane. Its function is as follows. Could be involved in insertion of integral membrane proteins into the membrane. The chain is Putative membrane protein insertion efficiency factor from Pasteurella multocida (strain Pm70).